Reading from the N-terminus, the 346-residue chain is N-acetyl-gamma-glutamyl-phosphate reductase (346 aa).

Residue C149 is part of the active site.

It belongs to the NAGSA dehydrogenase family. Type 1 subfamily.

It is found in the cytoplasm. It carries out the reaction N-acetyl-L-glutamate 5-semialdehyde + phosphate + NADP(+) = N-acetyl-L-glutamyl 5-phosphate + NADPH + H(+). It functions in the pathway amino-acid biosynthesis; L-arginine biosynthesis; N(2)-acetyl-L-ornithine from L-glutamate: step 3/4. In terms of biological role, catalyzes the NADPH-dependent reduction of N-acetyl-5-glutamyl phosphate to yield N-acetyl-L-glutamate 5-semialdehyde. This Saccharophagus degradans (strain 2-40 / ATCC 43961 / DSM 17024) protein is N-acetyl-gamma-glutamyl-phosphate reductase.